Consider the following 722-residue polypeptide: Glycine--tRNA ligase beta subunit (722 aa).

This sequence belongs to the class-II aminoacyl-tRNA synthetase family. In terms of assembly, tetramer of two alpha and two beta subunits.

Its subcellular location is the cytoplasm. The enzyme catalyses tRNA(Gly) + glycine + ATP = glycyl-tRNA(Gly) + AMP + diphosphate. The polypeptide is Glycine--tRNA ligase beta subunit (Xylella fastidiosa (strain Temecula1 / ATCC 700964)).